Here is a 114-residue protein sequence, read N- to C-terminus: Putative membrane protein insertion efficiency factor (114 aa).

It belongs to the UPF0161 family.

The protein localises to the cell inner membrane. Functionally, could be involved in insertion of integral membrane proteins into the membrane. The chain is Putative membrane protein insertion efficiency factor from Wolinella succinogenes (strain ATCC 29543 / DSM 1740 / CCUG 13145 / JCM 31913 / LMG 7466 / NCTC 11488 / FDC 602W) (Vibrio succinogenes).